The sequence spans 90 residues: Cuticle protein 9.5 (90 aa).

Functionally, component of the cuticle of migratory locust which contains more than 100 different structural proteins. The sequence is that of Cuticle protein 9.5 from Locusta migratoria (Migratory locust).